We begin with the raw amino-acid sequence, 86 residues long: Putative membrane protein insertion efficiency factor (86 aa).

The protein belongs to the UPF0161 family.

The protein localises to the cell inner membrane. Could be involved in insertion of integral membrane proteins into the membrane. This chain is Putative membrane protein insertion efficiency factor, found in Mannheimia succiniciproducens (strain KCTC 0769BP / MBEL55E).